A 335-amino-acid chain; its full sequence is Cytoskeleton protein RodZ (335 aa).

Over 1–111 the chain is Cytoplasmic; sequence MNTEATHDQN…LGKRRKKRDG (111 aa). The region spanning 19–71 is the HTH cro/C1-type domain; the sequence is LRNAREQLGLSQQAVAERLCLKVSTVRDIEEDKAPADLASTFLRGYIRSYARL. Positions 30–49 form a DNA-binding region, H-T-H motif; the sequence is QQAVAERLCLKVSTVRDIEE. The helical; Signal-anchor for type II membrane protein transmembrane segment at 112–132 threads the bilayer; that stretch reads WLMTFTWLVLFVVIGLSGAWW. Residues 133-335 are Periplasmic-facing; sequence WQDHKAQQEE…TLNAEQSPAQ (203 aa). Positions 148 to 164 are enriched in polar residues; it reads DQSSAELNNNQSQSVPL. A disordered region spans residues 148–244; it reads DQSSAELNNN…PLPTDQAGVT (97 aa). 2 stretches are compositionally biased toward low complexity: residues 165–205 and 217–239; these read DTST…DPQQ and DTAA…LPTD.

Belongs to the RodZ family.

Its subcellular location is the cell inner membrane. In terms of biological role, cytoskeletal protein that is involved in cell-shape control through regulation of the length of the long axis. The polypeptide is Cytoskeleton protein RodZ (Escherichia coli O127:H6 (strain E2348/69 / EPEC)).